The primary structure comprises 230 residues: MRLTVELIQNSLSYINPLKDRELDLRDNDISSLGNFPFFPRLRMLLLARNRVRQIQPSLANSIPGLTTLVLTANNIAELADLDPLRNLTKLTHLVLLENPVTRKEYYRLWIIWRIPSVRFLDYQKVKDAERAKAAELFGTATEPTALASKILGVKSRTFDIPSGGAADQPPPEKRLRVKLTDSERKRIEKMIREAKSLQEITRLERELNEGRIPGGALDGAGNDGDQMQL.

LRR repeat units lie at residues 19 to 40 (KDRE…PFFP), 41 to 62 (RLRM…LANS), and 65 to 86 (GLTT…DPLR). The LRRCT domain occupies 99-137 (NPVTRKEYYRLWIIWRIPSVRFLDYQKVKDAERAKAAEL). Residues 211–230 (GRIPGGALDGAGNDGDQMQL) are disordered. Positions 213-223 (IPGGALDGAGN) are enriched in gly residues.

It belongs to the U2 small nuclear ribonucleoprotein A family. As to quaternary structure, associated with the spliceosome.

The protein localises to the nucleus. Its function is as follows. Involved in pre-mRNA splicing. The polypeptide is U2 small nuclear ribonucleoprotein A' (lea1) (Emericella nidulans (strain FGSC A4 / ATCC 38163 / CBS 112.46 / NRRL 194 / M139) (Aspergillus nidulans)).